The primary structure comprises 363 residues: Phosphoserine aminotransferase (363 aa).

Arginine 42 is an L-glutamate binding site. Pyridoxal 5'-phosphate-binding positions include 76-77 (GR), tryptophan 102, threonine 156, aspartate 175, and glutamine 198. Lysine 199 is modified (N6-(pyridoxal phosphate)lysine). 240–241 (NT) contacts pyridoxal 5'-phosphate.

It belongs to the class-V pyridoxal-phosphate-dependent aminotransferase family. SerC subfamily. As to quaternary structure, homodimer. The cofactor is pyridoxal 5'-phosphate.

It localises to the cytoplasm. It carries out the reaction O-phospho-L-serine + 2-oxoglutarate = 3-phosphooxypyruvate + L-glutamate. The catalysed reaction is 4-(phosphooxy)-L-threonine + 2-oxoglutarate = (R)-3-hydroxy-2-oxo-4-phosphooxybutanoate + L-glutamate. The protein operates within amino-acid biosynthesis; L-serine biosynthesis; L-serine from 3-phospho-D-glycerate: step 2/3. Its pathway is cofactor biosynthesis; pyridoxine 5'-phosphate biosynthesis; pyridoxine 5'-phosphate from D-erythrose 4-phosphate: step 3/5. Its function is as follows. Catalyzes the reversible conversion of 3-phosphohydroxypyruvate to phosphoserine and of 3-hydroxy-2-oxo-4-phosphonooxybutanoate to phosphohydroxythreonine. The protein is Phosphoserine aminotransferase of Shewanella sp. (strain ANA-3).